A 157-amino-acid polypeptide reads, in one-letter code: Beta-defensin 125 (157 aa).

A signal peptide spans 1–20 (MNILMLTFIICGLLTQVTKG). Cystine bridges form between cysteine 27/cysteine 55, cysteine 35/cysteine 49, and cysteine 39/cysteine 56. Residues 109 to 157 (GETMTPETNTPETTMPPPETTTPETTMPPSETATSETMPPPSQRALTHN) are disordered. Composition is skewed to low complexity over residues 110–121 (ETMTPETNTPET) and 129–145 (TTPE…TSET).

The protein belongs to the beta-defensin family.

It is found in the secreted. In terms of biological role, has antibacterial activity. The sequence is that of Beta-defensin 125 (DEFB125) from Pan troglodytes (Chimpanzee).